The sequence spans 241 residues: Beta-nerve growth factor (241 aa).

An N-terminal signal peptide occupies residues 1-18; it reads MSMLFYTLITAFLIGIQA. Positions 19–121 are excised as a propeptide; that stretch reads EPHSESNVPA…PFNRTHRSKR (103 aa). N-linked (GlcNAc...) asparagine glycans are attached at residues Asn69 and Asn114. 3 disulfides stabilise this stretch: Cys136–Cys201, Cys179–Cys229, and Cys189–Cys231. A 1-acyl-sn-glycero-3-phospho-(1D-myo-inositol) contacts are provided by Tyr173 and Lys209. A 1-acyl-sn-glycero-3-phospho-L-serine is bound at residue Lys209.

The protein belongs to the NGF-beta family. As to quaternary structure, homodimer. The homodimer interacts with a single NTRK1 chain. The homodimer interacts with a single NGFR chain. The NGF dimer interacts with a single SORCS2 chain (via extracellular domain). The NGF precursor (proNGF) binds to a receptor complex formed by SORT1 and NGFR, which leads to NGF endocytosis. Both mature NGF and the immature NGF precursor (proNGF) interact with SORCS2 and with the heterodimer formed by SORCS2 and NGFR (via extracellular domains). The NGF precursor (proNGF) has much higher affinity for SORCS2 than mature NGF. The NGF precursor (proNGF) has much higher affinity for SORT1 than mature NGF. Interacts with ADAM10 in a divalent cation-dependent manner. Interaction with SORCS3.

Its subcellular location is the secreted. The protein resides in the endosome lumen. Functionally, nerve growth factor is important for the development and maintenance of the sympathetic and sensory nervous systems. Extracellular ligand for the NTRK1 and NGFR receptors, activates cellular signaling cascades to regulate neuronal proliferation, differentiation and survival. The immature NGF precursor (proNGF) functions as a ligand for the heterodimeric receptor formed by SORCS2 and NGFR, and activates cellular signaling cascades that lead to inactivation of RAC1 and/or RAC2, reorganization of the actin cytoskeleton and neuronal growth cone collapse. In contrast to mature NGF, the precursor form (proNGF) promotes neuronal apoptosis (in vitro). Inhibits metalloproteinase-dependent proteolysis of platelet glycoprotein VI. Binds lysophosphatidylinositol and lysophosphatidylserine between the two chains of the homodimer. The lipid-bound form promotes histamine relase from mast cells, contrary to the lipid-free form. This is Beta-nerve growth factor (NGF) from Homo sapiens (Human).